Consider the following 246-residue polypeptide: MFFAVITLFPEMFEAITAYGISGRAAKRDIVQVTCINPRDFAEGNYRRVDERPFGGGPGMVMMAEPLAKAINHAKQLASQAGCVHVPVVYMSPQGKTLNEQAVQQFVDYDGLIVLCGRYEGVDERLIQHYVDQEWSIGDYVLSGGELPAMVLLDSIIRRLPNVMSDEQSAIQDSFVDGLLDCPQYTKPDQFEGLDVPEILKSGHHANIEKWRFLQRYQRTLERRPELIEQVTLTKQQKKWLSDEQG.

Residues Gly117 and 137–142 (IGDYVL) contribute to the S-adenosyl-L-methionine site.

It belongs to the RNA methyltransferase TrmD family. Homodimer.

Its subcellular location is the cytoplasm. It catalyses the reaction guanosine(37) in tRNA + S-adenosyl-L-methionine = N(1)-methylguanosine(37) in tRNA + S-adenosyl-L-homocysteine + H(+). Functionally, specifically methylates guanosine-37 in various tRNAs. The chain is tRNA (guanine-N(1)-)-methyltransferase from Acinetobacter baumannii (strain ACICU).